A 194-amino-acid polypeptide reads, in one-letter code: WASH complex subunit 3 (194 aa).

Position 1 is an N-acetylmethionine (Met-1). Positions 46 to 74 form a coiled coil; it reads AVCEEKLADLSLRIQQIETTLNILDAKLS. 2 disordered regions span residues 94-126 and 158-194; these read VTNGSHSETTSEQTQQNSTQDSGAQESEAPSEN and SEGLDPELLEKPDAPVPNGESERAVEESSDSDSSFSD. Residues 98–113 are compositionally biased toward low complexity; the sequence is SHSETTSEQTQQNSTQ. Residues 114–126 are compositionally biased toward polar residues; it reads DSGAQESEAPSEN.

The protein belongs to the CCDC53 family. As to quaternary structure, component of the WASH core complex also described as WASH regulatory complex (SHRC) composed of WASHC1, WASHC2, WASHC3, WASHC4 and WASHC5. The WASH core complex associates via WASHC2 with the F-actin-capping protein dimer (formed by CAPZA1, CAPZA2 or CAPZA3 and CAPZB) in a transient or substoichiometric manner which was initially described as WASH complex.

Its subcellular location is the early endosome. Functionally, acts as a component of the WASH core complex that functions as a nucleation-promoting factor (NPF) at the surface of endosomes, where it recruits and activates the Arp2/3 complex to induce actin polymerization, playing a key role in the fission of tubules that serve as transport intermediates during endosome sortingg. The protein is WASH complex subunit 3 of Mus musculus (Mouse).